The following is a 145-amino-acid chain: 3-dehydroquinate dehydratase (145 aa).

The active-site Proton acceptor is Tyr24. Substrate is bound by residues Asn75, His81, and Asp88. The active-site Proton donor is the His101. Residues 102–103 (IS) and Arg112 contribute to the substrate site.

It belongs to the type-II 3-dehydroquinase family. In terms of assembly, homododecamer.

It catalyses the reaction 3-dehydroquinate = 3-dehydroshikimate + H2O. The protein operates within metabolic intermediate biosynthesis; chorismate biosynthesis; chorismate from D-erythrose 4-phosphate and phosphoenolpyruvate: step 3/7. Its function is as follows. Catalyzes a trans-dehydration via an enolate intermediate. The polypeptide is 3-dehydroquinate dehydratase (Rhizobium johnstonii (strain DSM 114642 / LMG 32736 / 3841) (Rhizobium leguminosarum bv. viciae)).